Consider the following 51-residue polypeptide: Large ribosomal subunit protein eL39 (51 aa).

The interval 32–51 (KGSVKQHPKMRHWRRKNLKK) is disordered. Basic residues predominate over residues 33–51 (GSVKQHPKMRHWRRKNLKK).

Belongs to the eukaryotic ribosomal protein eL39 family.

The sequence is that of Large ribosomal subunit protein eL39 from Methanococcus maripaludis (strain C5 / ATCC BAA-1333).